We begin with the raw amino-acid sequence, 260 residues long: OCIA domain-containing protein 1 (260 aa).

In terms of domain architecture, OCIA spans M1 to E110. The tract at residues D146 to D260 is disordered. A compositionally biased stretch (polar residues) spans P155 to D164. A compositionally biased stretch (basic and acidic residues) spans E205–Y215.

Belongs to the OCIAD1 family.

In Drosophila pseudoobscura pseudoobscura (Fruit fly), this protein is OCIA domain-containing protein 1.